We begin with the raw amino-acid sequence, 75 residues long: Probable [Fe-S]-dependent transcriptional repressor (75 aa).

Iron-sulfur cluster contacts are provided by cysteine 55, cysteine 60, cysteine 63, and cysteine 72.

It belongs to the FeoC family.

Its function is as follows. May function as a transcriptional regulator that controls feoABC expression. The polypeptide is Probable [Fe-S]-dependent transcriptional repressor (Serratia marcescens).